The sequence spans 355 residues: MIKVMHIFSRMNRGGAELRTMDTMKLLNREFEFHVCATSGKRGELDDELESMGITIHYLDIKKFSFPFKFIKLLKKKNIDVVHSHILFMSGLIQLLSFSANVRNRITHFRTSKDSKEQYNKIRKARNKVLKAIIEIFSTKILYVSNIANRNLISMKLFPKKHKTIYNGFEISNINKNFKKEENSFIYVGRFIHTKNQLFLLDVIEILKKEFNTNIEITFVGNIQTDYGKKFLSIANERGLNKNIKVIGEVNNPLDYLKTSEYFLFPSELEGLPGALIEAHHHNCIVISSNIKENSEVNQYFKDSSFELELIPKTWASTIKKLISRKKHISFNDSNVFDINMTTQELKEIYMSKTL.

It belongs to the glycosyltransferase group 1 family. Glycosyltransferase 4 subfamily.

It functions in the pathway capsule biogenesis; capsule polysaccharide biosynthesis. In terms of biological role, required for the biosynthesis of type 1 capsular polysaccharide. This is Capsular polysaccharide biosynthesis glycosyltransferase CapH (capH) from Staphylococcus aureus.